Consider the following 211-residue polypeptide: Beta-crystallin B3 (211 aa).

M1 is modified (N-acetylmethionine). A2 is subject to N-acetylalanine; in Beta-crystallin B3, N-terminally processed. The segment at 2-23 (AEQHSTPEQAAAGKSHGGLGGS) is N-terminal arm. Beta/gamma crystallin 'Greek key' domains lie at 24–63 (YKVI…QVES) and 64–108 (GPWL…RPLH). A connecting peptide region spans residues 109 to 113 (IDGPD). 2 consecutive Beta/gamma crystallin 'Greek key' domains span residues 114 to 155 (HKLH…RAIN) and 156 to 198 (GTWV…RRIR). The tract at residues 200–211 (QKWHKRGVFLSS) is C-terminal arm.

This sequence belongs to the beta/gamma-crystallin family. As to quaternary structure, homo/heterodimer, or complexes of higher-order. The structure of beta-crystallin oligomers seems to be stabilized through interactions between the N-terminal arms.

In terms of biological role, crystallins are the dominant structural components of the vertebrate eye lens. The polypeptide is Beta-crystallin B3 (CRYBB3) (Bos taurus (Bovine)).